Consider the following 448-residue polypeptide: Histidine--tRNA ligase (448 aa).

Disordered stretches follow at residues 1 to 20 and 428 to 448; these read MAIK…SPKL and AGQA…QEKA.

Belongs to the class-II aminoacyl-tRNA synthetase family. Homodimer.

Its subcellular location is the cytoplasm. It carries out the reaction tRNA(His) + L-histidine + ATP = L-histidyl-tRNA(His) + AMP + diphosphate + H(+). The chain is Histidine--tRNA ligase from Deinococcus deserti (strain DSM 17065 / CIP 109153 / LMG 22923 / VCD115).